A 453-amino-acid polypeptide reads, in one-letter code: Ribulose bisphosphate carboxylase large chain (453 aa).

Positions 1–2 are excised as a propeptide; sequence MS. Residue P3 is modified to N-acetylproline. K14 is modified (N6,N6,N6-trimethyllysine). Substrate contacts are provided by N123 and T173. Catalysis depends on K175, which acts as the Proton acceptor. K177 contacts substrate. Mg(2+)-binding residues include K201, D203, and E204. K201 carries the post-translational modification N6-carboxylysine. H294 serves as the catalytic Proton acceptor. Substrate is bound by residues R295, H327, and S379.

The protein belongs to the RuBisCO large chain family. Type I subfamily. As to quaternary structure, heterohexadecamer of 8 large chains and 8 small chains; disulfide-linked. The disulfide link is formed within the large subunit homodimers. It depends on Mg(2+) as a cofactor. The disulfide bond which can form in the large chain dimeric partners within the hexadecamer appears to be associated with oxidative stress and protein turnover.

It localises to the plastid. The protein localises to the chloroplast. The enzyme catalyses 2 (2R)-3-phosphoglycerate + 2 H(+) = D-ribulose 1,5-bisphosphate + CO2 + H2O. It carries out the reaction D-ribulose 1,5-bisphosphate + O2 = 2-phosphoglycolate + (2R)-3-phosphoglycerate + 2 H(+). In terms of biological role, ruBisCO catalyzes two reactions: the carboxylation of D-ribulose 1,5-bisphosphate, the primary event in carbon dioxide fixation, as well as the oxidative fragmentation of the pentose substrate in the photorespiration process. Both reactions occur simultaneously and in competition at the same active site. In Valantia muralis (Wall valantia), this protein is Ribulose bisphosphate carboxylase large chain.